A 461-amino-acid polypeptide reads, in one-letter code: Fibrinogen C domain-containing protein 1 (461 aa).

Positions 1-24 (MVNDRWKTMGGAAQLEDRPRDKPQ) are disordered. Topologically, residues 1 to 33 (MVNDRWKTMGGAAQLEDRPRDKPQRPSCGYVLC) are cytoplasmic. Positions 15-24 (LEDRPRDKPQ) are enriched in basic and acidic residues. The chain crosses the membrane as a helical; Signal-anchor for type II membrane protein span at residues 34 to 54 (TVLLALAVLLAVAVTGAVLFL). Over 55 to 461 (NHAHAPGTAP…MKIRPVREDR (407 aa)) the chain is Extracellular. Positions 214-238 (GRPRNKADLQRAPARGTRPRGCATG) are disordered. Residues 235-458 (CATGSRPRDC…FSEMKIRPVR (224 aa)) enclose the Fibrinogen C-terminal domain. C244 and C273 are joined by a disulfide. N340 carries N-linked (GlcNAc...) asparagine glycosylation. The Ca(2+) site is built by D393 and D395. C401 and C414 form a disulfide bridge.

Homotetramer; disulfide-linked. In terms of tissue distribution, expressed in the small and large intestinal epithelial cells with a highly polarized localization to the apical surface corresponding to the brush border and in the ducts of the salivary gland.

The protein resides in the membrane. Acetyl group-binding receptor which shows a high-affinity and calcium-dependent binding to acetylated structures such as chitin, some N-acetylated carbohydrates, and amino acids, but not to their non-acetylated counterparts. Can facilitate the endocytosis of acetylated components. The sequence is that of Fibrinogen C domain-containing protein 1 (FIBCD1) from Homo sapiens (Human).